The following is a 91-amino-acid chain: Small ribosomal subunit protein uS19 (91 aa).

It belongs to the universal ribosomal protein uS19 family.

Functionally, protein S19 forms a complex with S13 that binds strongly to the 16S ribosomal RNA. This Laribacter hongkongensis (strain HLHK9) protein is Small ribosomal subunit protein uS19.